The sequence spans 74 residues: MKFQYLLAVFLIVLVVTDHCQAFFSLLPSLIGGLVSAIKGRRRRQLEARFEPKQRNFRKRELDFEKLFANMPDY.

The first 22 residues, 1–22 (MKFQYLLAVFLIVLVVTDHCQA), serve as a signal peptide directing secretion. The residue at position 39 (lysine 39) is a Lysine amide; partial. The propeptide occupies 45–74 (QLEARFEPKQRNFRKRELDFEKLFANMPDY).

It belongs to the non-disulfide-bridged peptide (NDBP) superfamily. Short antimicrobial peptide (group 4) family. As to expression, expressed by the venom gland.

It is found in the secreted. The protein resides in the target cell membrane. Its function is as follows. Has potent antibacterial activity against Gram-positive bacteria M.luteus, B.thuringiensis, S.aureus and B.subtilis, but not Gram-negative bacteria. Shows a weak cytotoxicity effect against mammalian cell lines and relatively low hemolytic activity against human erythrocytes. This Isometrus maculatus (Lesser brown scorpion) protein is Imcroporin.